Reading from the N-terminus, the 289-residue chain is Protease HtpX homolog (289 aa).

2 helical membrane-spanning segments follow: residues 3-23 and 28-48; these read IVGTILFAFYSVAIAAAWFFF and TILAIAIVGSVVLVGVQYKVG. His129 is a Zn(2+) binding site. Glu130 is an active-site residue. His133 is a binding site for Zn(2+). The next 2 helical transmembrane spans lie at 144–164 and 172–192; these read LGQGIASIVGIVAQYIVLFSG and FLAIVVGNLVQFLVTLFVLAI. Glu197 serves as a coordination point for Zn(2+). The tract at residues 222–250 is disordered; the sequence is SQGNEQAAQQQRQRTSRGRGRRQRGQRND. Basic residues predominate over residues 235 to 246; the sequence is RTSRGRGRRQRG.

The protein belongs to the peptidase M48B family. Requires Zn(2+) as cofactor.

It is found in the cell membrane. The polypeptide is Protease HtpX homolog (Halobacterium salinarum (strain ATCC 700922 / JCM 11081 / NRC-1) (Halobacterium halobium)).